A 265-amino-acid polypeptide reads, in one-letter code: 3-methyl-2-oxobutanoate hydroxymethyltransferase (265 aa).

Mg(2+)-binding residues include Asp-45 and Asp-84. 3-methyl-2-oxobutanoate is bound by residues 45 to 46 (DS), Asp-84, and Lys-112. Residue Glu-114 participates in Mg(2+) binding. Glu-181 functions as the Proton acceptor in the catalytic mechanism.

Belongs to the PanB family. In terms of assembly, homodecamer; pentamer of dimers. Mg(2+) serves as cofactor.

Its subcellular location is the cytoplasm. It catalyses the reaction 3-methyl-2-oxobutanoate + (6R)-5,10-methylene-5,6,7,8-tetrahydrofolate + H2O = 2-dehydropantoate + (6S)-5,6,7,8-tetrahydrofolate. It functions in the pathway cofactor biosynthesis; (R)-pantothenate biosynthesis; (R)-pantoate from 3-methyl-2-oxobutanoate: step 1/2. In terms of biological role, catalyzes the reversible reaction in which hydroxymethyl group from 5,10-methylenetetrahydrofolate is transferred onto alpha-ketoisovalerate to form ketopantoate. The polypeptide is 3-methyl-2-oxobutanoate hydroxymethyltransferase (Yersinia pestis bv. Antiqua (strain Antiqua)).